A 68-amino-acid chain; its full sequence is Large ribosomal subunit protein bL33c (68 aa).

This sequence belongs to the bacterial ribosomal protein bL33 family.

It localises to the plastid. The polypeptide is Large ribosomal subunit protein bL33c (Cuscuta reflexa (Southern Asian dodder)).